A 206-amino-acid polypeptide reads, in one-letter code: CMP-5'-(N-acetyl-N-hydroxy-3-aminopropyl)phosphonate hydrolase (206 aa).

In terms of domain architecture, Nudix hydrolase spans 37 to 166 (VRAPGAAIIV…RTVTSGTAIG (130 aa)). The Nudix box motif lies at 74–95 (GLVDDREDPAVTAAREAEEETG). Residues 177-194 (RQQPGGVQEQPGGAQQQG) show a composition bias toward low complexity. The tract at residues 177 to 206 (RQQPGGVQEQPGGAQQQGMNESHSGRTVRG) is disordered.

It belongs to the Nudix hydrolase family. Mg(2+) is required as a cofactor.

The enzyme catalyses CMP-5'-(N-acetyl-N-hydroxy-3-aminopropyl)phosphonate + H2O = 3-(N-acetyl-N-hydroxy)aminopropylphosphonate + CMP + H(+). It functions in the pathway antibiotic biosynthesis. Functionally, nucleotide hydrolase involved in the biosynthesis of the phosphonate antibiotic FR-900098, a potent antimalarial agent that acts as an inhibitor of 1-deoxy-D-xylulose 5-phosphate reductoisomerase (DXR), the first enzyme in the nonmevalonate pathway for isoprenoid biosynthesis. Catalyzes the hydrolysis of CMP-5'-(N-acetyl-N-hydroxy-3-aminopropyl)phosphonate (CMP-5'-FR-900098) to produce CMP and the final compound FR-900098. In vitro, has broad substrate specificity and also catalyzes the hydrolysis of all the other CMP-containing intermediates within the pathway and shows low activity toward CTP. In Streptomyces rubellomurinus (strain ATCC 31215), this protein is CMP-5'-(N-acetyl-N-hydroxy-3-aminopropyl)phosphonate hydrolase.